A 408-amino-acid chain; its full sequence is UDP-N-acetylglucosamine--dolichyl-phosphate N-acetylglucosaminephosphotransferase (408 aa).

The Lumenal portion of the chain corresponds to 1–10 (MWAFSELPMP). The chain crosses the membrane as a helical span at residues 11–38 (LLINLIVSLLGFVATVTLIPAFRGHFIA). Residues 39 to 58 (ARLCGQDLNKTSRQQIPESQ) lie on the Cytoplasmic side of the membrane. UDP-N-acetyl-alpha-D-glucosamine is bound by residues 44-46 (QDL) and E56. L46 is a tunicamycin A1 binding site. A helical transmembrane segment spans residues 59-78 (GVISGAVFLIILFCFIPFPF). Topologically, residues 79–91 (LNCFVKEQCKAFP) are lumenal. The helical transmembrane segment at 92–118 (HHEFVALIGALLAICCMIFLGFADDVL) threads the bilayer. N119 is a tunicamycin A1 binding site. Residues 119-121 (NLR) lie on the Cytoplasmic side of the membrane. The chain crosses the membrane as a helical span at residues 122–143 (WRHKLLLPTAASLPLLMVYFTN). K125 serves as a coordination point for dolichyl phosphate. Residues 144-166 (FGNTTIVVPKPFRPILGLHLDLG) lie on the Lumenal side of the membrane. N-linked (GlcNAc...) asparagine glycosylation occurs at N146. Residues 167-186 (ILYYVYMGLLAVFCTNAINI) traverse the membrane as a helical segment. 178–186 (VFCTNAINI) lines the dolichyl phosphate pocket. N185 lines the tunicamycin A1 pocket. N185 contacts Mg(2+). The Cytoplasmic portion of the chain corresponds to 187 to 192 (LAGING). N191 provides a ligand contact to UDP-N-acetyl-alpha-D-glucosamine. Residues 193-213 (LEAGQSLVISASIIVFNLVEL) traverse the membrane as a helical segment. At 214–218 (EGDCR) the chain is on the lumenal side. The chain crosses the membrane as a helical span at residues 219–242 (DDHVFSLYFMIPFFFTTLGLLYHN). Over 243 to 250 (WYPSRVFV) the chain is Cytoplasmic. A helical membrane pass occupies residues 251–269 (GDTFCYFAGMTFAVVGILG). Position 252 (D252) interacts with tunicamycin A1. Position 252 (D252) interacts with Mg(2+). Topologically, residues 270–271 (HF) are lumenal. A helical membrane pass occupies residues 272 to 293 (SKTMLLFFMPQVFNFLYSLPQL). Residues 294–375 (LHIIPCPRHR…LLLKVLGPIH (82 aa)) are Cytoplasmic-facing. 301–303 (RHR) lines the UDP-N-acetyl-alpha-D-glucosamine pocket. R303 contributes to the tunicamycin A1 binding site. The helical transmembrane segment at 376–400 (ERNLTLLLLLLQILGSAITFSIRYQ) threads the bilayer. The Lumenal segment spans residues 401–408 (LVRLFYDV).

Belongs to the glycosyltransferase 4 family. Homodimer. Mg(2+) serves as cofactor.

Its subcellular location is the endoplasmic reticulum membrane. The enzyme catalyses a di-trans,poly-cis-dolichyl phosphate + UDP-N-acetyl-alpha-D-glucosamine = an N-acetyl-alpha-D-glucosaminyl-diphospho-di-trans,poly-cis-dolichol + UMP. It participates in protein modification; protein glycosylation. With respect to regulation, inhibited by natural nucleoside antibiotic tunicamycin, which acts as a structural analog and competitor of UDP-GlcNAc. Activated by mannosylphosphoryldolichol and phospholipids such as phosphatidylglycerol and phosphatidylcholine. UDP-N-acetylglucosamine--dolichyl-phosphate N-acetylglucosaminephosphotransferase that operates in the biosynthetic pathway of dolichol-linked oligosaccharides, the glycan precursors employed in protein asparagine (N)-glycosylation. The assembly of dolichol-linked oligosaccharides begins on the cytosolic side of the endoplasmic reticulum membrane and finishes in its lumen. The sequential addition of sugars to dolichol pyrophosphate produces dolichol-linked oligosaccharides containing fourteen sugars, including two GlcNAcs, nine mannoses and three glucoses. Once assembled, the oligosaccharide is transferred from the lipid to nascent proteins by oligosaccharyltransferases. Catalyzes the initial step of dolichol-linked oligosaccharide biosynthesis, transfering GlcNAc-1-P from cytosolic UDP-GlcNAc onto the carrier lipid dolichyl phosphate (P-dolichol), yielding GlcNAc-P-P-dolichol embedded in the cytoplasmic leaflet of the endoplasmic reticulum membrane. This chain is UDP-N-acetylglucosamine--dolichyl-phosphate N-acetylglucosaminephosphotransferase, found in Homo sapiens (Human).